The sequence spans 324 residues: MENYNVKTRAFPTIGIILLGGISDKKNRIPLHTTAGIAYTGINNDVYTETKLYVSKDEKCYIDGKEIDLNSDRSPSKVIDKFKHEILMRVNLDDENNLSIDSRNFNILSGSSDSGAAALGECIESIFEYNINIFTFENDLQRISESVGRSLYGGLTVNYANGRESLTEPLLEPEAFNNFTIIGAHFNIDRKPSNEIHENIIKHENYRERIKSAERKAKKLEELSRNANIKGIFELAESDTVEYHKMLHDVGVDIINDRMENLIERVKEMKNNFWNSYIVTGGPNVFVITEKKDVDKAMEGLNDLCDDIRLLKVAGKPQVISKNF.

Residue L19 coordinates substrate. 109-112 (SGSS) provides a ligand contact to ATP. Substrate contacts are provided by E145 and R149. R190 and S193 together coordinate ATP.

The protein belongs to the GHMP kinase family. As to quaternary structure, homodimer.

The enzyme catalyses (R)-mevalonate + ATP = (R)-3-phosphomevalonate + ADP + H(+). It functions in the pathway isoprenoid biosynthesis; isopentenyl diphosphate biosynthesis via mevalonate pathway. Its function is as follows. Catalyzes the phosphorylation of mevalonate (MVA) to yield mevalonate-3-phosphate. Functions in an alternative mevalonate pathway, which passes through mevalonate 3-phosphate rather than mevalonate 5-phosphate. Also able to catalyze the formation of isobutene via the conversion of 3-hydroxyisovalerate (3-HIV) to an unstable 3-phosphate intermediate that undergoes a spontaneous decarboxylation. This chain is Mevalonate-3-kinase, found in Picrophilus torridus (strain ATCC 700027 / DSM 9790 / JCM 10055 / NBRC 100828 / KAW 2/3).